The chain runs to 90 residues: Molybdopterin synthase sulfur carrier subunit (90 aa).

Gly-90 carries the post-translational modification 1-thioglycine; alternate. Position 90 is a glycyl adenylate; alternate (Gly-90).

Belongs to the MoaD family. MOCS2A subfamily. As to quaternary structure, heterotetramer; composed of 2 small (Mocs2A) and 2 large (Mocs2B) subunits. In terms of processing, C-terminal thiocarboxylation occurs in 2 steps, it is first acyl-adenylated (-COAMP) via the hesA/moeB/thiF part of MOCS3, then thiocarboxylated (-COSH) via the rhodanese domain of MOCS3.

Its subcellular location is the cytoplasm. It functions in the pathway cofactor biosynthesis; molybdopterin biosynthesis. Its function is as follows. Acts as a sulfur carrier required for molybdopterin biosynthesis. Component of the molybdopterin synthase complex that catalyzes the conversion of precursor Z into molybdopterin by mediating the incorporation of 2 sulfur atoms into precursor Z to generate a dithiolene group. In the complex, serves as sulfur donor by being thiocarboxylated (-COSH) at its C-terminus by MOCS3. After interaction with Mocs2B, the sulfur is then transferred to precursor Z to form molybdopterin. The sequence is that of Molybdopterin synthase sulfur carrier subunit from Drosophila yakuba (Fruit fly).